The sequence spans 149 residues: uncharacterized protein (149 aa).

Residues 124-144 (IIIIALIIILANYAPSIIGKI) form a helical membrane-spanning segment.

The protein belongs to the M.jannaschii MJ0023/MJ0349/MJ1072/MJ1074/MJ1107/MJECL16 family.

It is found in the membrane. This is an uncharacterized protein from Methanocaldococcus jannaschii (strain ATCC 43067 / DSM 2661 / JAL-1 / JCM 10045 / NBRC 100440) (Methanococcus jannaschii).